A 171-amino-acid polypeptide reads, in one-letter code: Adenine phosphoribosyltransferase (171 aa).

This sequence belongs to the purine/pyrimidine phosphoribosyltransferase family. Homodimer.

It localises to the cytoplasm. The catalysed reaction is AMP + diphosphate = 5-phospho-alpha-D-ribose 1-diphosphate + adenine. It functions in the pathway purine metabolism; AMP biosynthesis via salvage pathway; AMP from adenine: step 1/1. Functionally, catalyzes a salvage reaction resulting in the formation of AMP, that is energically less costly than de novo synthesis. The chain is Adenine phosphoribosyltransferase from Geotalea uraniireducens (strain Rf4) (Geobacter uraniireducens).